A 115-amino-acid polypeptide reads, in one-letter code: MFLAGVLCMCAAAASALFGSWSLCHTPTADPTALALRAMAPTQLAAAVMLAAGGVVAVAAPGHTALMVVIVCIAGAVGTLAAGSWQSAQYALRRETASPTANCVGSCAVCTQACH.

Helical transmembrane passes span 1-21 (MFLAGVLCMCAAAASALFGSW), 33-53 (ALALRAMAPTQLAAAVMLAAG), and 54-74 (GVVAVAAPGHTALMVVIVCIA).

To M.leprae ML0030.

It is found in the cell membrane. This is an uncharacterized protein from Mycobacterium tuberculosis (strain CDC 1551 / Oshkosh).